Here is a 361-residue protein sequence, read N- to C-terminus: MALTLEALVARFGGEIVGDGRREVGGLAPLDQAGPQHLAFLANPKYLAQVETTAAGAVLIAPRDLEKLGAAANGRNFIITPNPYAYFARVAQMFIDLAAPQRAAGVHPSATIDPAAQVAASAVIGPHVSVEAGAVIGERVQLDANVFVGRGTRIGDDSHLYPNVTIYHGCTLGPRAIVHSGAVIGSDGFGFAPDFVGEGDARTGAWVKIPQVGGVKVGPDVEIGANTTIDRGAMADTVIDECVKIDNLVQIGHNCRIGAYTVIAGCAGIAGSTTIGKHCMIGGAVGVAGHVTLGDYVIVTAKSGVSKSLPKAGIYTSAFPAVEHGDWNKSAALVRNLDKLRDRIKALETALAAREGDAGGA.

Histidine 253 serves as the catalytic Proton acceptor.

The protein belongs to the transferase hexapeptide repeat family. LpxD subfamily. Homotrimer.

It carries out the reaction a UDP-3-O-[(3R)-3-hydroxyacyl]-alpha-D-glucosamine + a (3R)-hydroxyacyl-[ACP] = a UDP-2-N,3-O-bis[(3R)-3-hydroxyacyl]-alpha-D-glucosamine + holo-[ACP] + H(+). Its pathway is bacterial outer membrane biogenesis; LPS lipid A biosynthesis. In terms of biological role, catalyzes the N-acylation of UDP-3-O-acylglucosamine using 3-hydroxyacyl-ACP as the acyl donor. Is involved in the biosynthesis of lipid A, a phosphorylated glycolipid that anchors the lipopolysaccharide to the outer membrane of the cell. The protein is UDP-3-O-acylglucosamine N-acyltransferase of Burkholderia thailandensis (strain ATCC 700388 / DSM 13276 / CCUG 48851 / CIP 106301 / E264).